A 904-amino-acid chain; its full sequence is Protein translocase subunit SecA (904 aa).

Residues Gln-87, 105–109, and Asp-512 each bind ATP; that span reads GEGKT. The interval 851-870 is disordered; sequence LARQQQLSHQTDNSALMSEE. The Zn(2+) site is built by Cys-888, Cys-890, Cys-899, and His-900.

The protein belongs to the SecA family. In terms of assembly, monomer and homodimer. Part of the essential Sec protein translocation apparatus which comprises SecA, SecYEG and auxiliary proteins SecDF-YajC and YidC. It depends on Zn(2+) as a cofactor.

The protein localises to the cell inner membrane. The protein resides in the cytoplasm. The enzyme catalyses ATP + H2O + cellular proteinSide 1 = ADP + phosphate + cellular proteinSide 2.. Functionally, part of the Sec protein translocase complex. Interacts with the SecYEG preprotein conducting channel. Has a central role in coupling the hydrolysis of ATP to the transfer of proteins into and across the cell membrane, serving both as a receptor for the preprotein-SecB complex and as an ATP-driven molecular motor driving the stepwise translocation of polypeptide chains across the membrane. The protein is Protein translocase subunit SecA of Yersinia pseudotuberculosis serotype O:1b (strain IP 31758).